We begin with the raw amino-acid sequence, 445 residues long: MAGVSPAVFGCPDVTLGRNTAVREVQENITSVDSLTLASSNTDFAFSLYKELVLKNPDENVVFSPFSICTALALLSLGAKSNTLKEILEGLKFNLTETPEPDIHQGFRYLLDLLSQPGNQVQISTGSALFIEKHLQILAEFKEKARALYQAEAFTADFQQPLEATKLINDYVSNHTQGKIKELISDLDKRTLMVLVNYIYFKGKWEMPFDPDDTCKSEFYLDENRSVKVPMMKINNLTTPYFRDEELSCTVVELKYTGNASAMFILPDQGKMQQVEASLQPETLRNWKDSLKPRLINELCLPKFSISTDYSLEHILPELGIRELFSTQADLSAITGTKDLRTSQVVHKAVLDVAETGTEAAAGTGYQNLQCCQGVIYSMKIYFDRPFLMIISDTNTHIALFMAKVSNPESDENFLNVEYAFPQVLEIMPEYRSVCTCCLPCLTRQ.

N28, N94, N174, and N259 each carry an N-linked (GlcNAc...) asparagine glycan. The interval 357–382 (GTEAAAGTGYQNLQCCQGVIYSMKIY) is RCL.

This sequence belongs to the serpin family.

The protein is Serine protease inhibitor A3F (Serpina3f) of Mus musculus (Mouse).